The sequence spans 334 residues: MRRMLYAQLPSRALVVVAQLGIADILAEGPADISTLAERTSTDAVALARLLRGLAVFGVFEEGAEQVYSLTPLGEALTSGHPASALPSATLVAGQFGAAWGDLLETVRTGQSPFERSRGVSLFTHMEQDEELRAVFDDSQGRGLALELDEILRAIDFSAYPTVVDVGGSDGTFLRRILSAHPDISGIVFDLPGSTSLQAERPTADPLEGRYSVATGDFFDSLPEGGDLYLLSHILHDWDDDRAVQILRTCRAAMSDDATLMVVDLIAANRGQRDERLHTAALMDLYMLSLFGGNGGQERTAAQVEVLLSKAGFRITRVDSLPSGMNVIRAVRAA.

S-adenosyl-L-methionine is bound by residues Asp190 and Gly216–Phe218. His236 serves as the catalytic Proton acceptor.

It belongs to the class I-like SAM-binding methyltransferase superfamily. Cation-independent O-methyltransferase family. COMT subfamily.

The catalysed reaction is 5-hydroxy-3-methyl-L-tyrosine + S-adenosyl-L-methionine = 5-hydroxy-3-methyl-O-methyl-L-tyrosine + S-adenosyl-L-homocysteine + H(+). The protein operates within antibiotic biosynthesis. O-methyltransferase that mediates the methylation of 3-hydroxy-5-methyl-L-tyrosine (3-OH-5-Me-Tyr) into 3-hydroxy-5-methyl-O-methyltyrosine (3-OH-5-Me-OMe-Tyr), a core structure of saframycin A, a potent antitumor antibiotic that belongs to the tetrahydroisoquinoline family. This Streptomyces lavendulae protein is O-methyltransferase SfmM3.